The primary structure comprises 469 residues: Neuraminidase (469 aa).

Over 1–6 the chain is Intravirion; sequence MNPNQK. The helical transmembrane segment at 7-29 threads the bilayer; the sequence is IITIGSVSLTIATICFLMQIAIQ. Residues 11-33 are involved in apical transport and lipid raft association; that stretch reads GSVSLTIATICFLMQIAIQVTTV. Residues 30-469 are Virion surface-facing; the sequence is VTTVTLHFKQ…DGADINLMPI (440 aa). The segment at 36–88 is hypervariable stalk region; it reads HFKQYECDSPANNQVMPCEPIIIERNITEIVYLTNTTIEKEICPKLVEYRNWS. N-linked (GlcNAc...) asparagine; by host glycosylation is found at N61, N70, and N86. The segment at 91-469 is head of neuraminidase; that stretch reads QCKITGFAPF…DGADINLMPI (379 aa). Intrachain disulfides connect C92-C417, C124-C129, C183-C230, C232-C237, C278-C291, C280-C289, C318-C337, and C421-C447. Residue R118 coordinates substrate. An N-linked (GlcNAc...) asparagine; by host glycan is attached at N146. D151 serves as the catalytic Proton donor/acceptor. R152 is a binding site for substrate. 2 N-linked (GlcNAc...) asparagine; by host glycosylation sites follow: N200 and N234. 276–277 provides a ligand contact to substrate; it reads EE. R292 is a substrate binding site. 3 residues coordinate Ca(2+): D293, G297, and D324. R371 lines the substrate pocket. N402 is a glycosylation site (N-linked (GlcNAc...) asparagine; by host). The Nucleophile role is filled by Y406.

The protein belongs to the glycosyl hydrolase 34 family. As to quaternary structure, homotetramer. It depends on Ca(2+) as a cofactor. N-glycosylated.

It is found in the virion membrane. Its subcellular location is the host apical cell membrane. It catalyses the reaction Hydrolysis of alpha-(2-&gt;3)-, alpha-(2-&gt;6)-, alpha-(2-&gt;8)- glycosidic linkages of terminal sialic acid residues in oligosaccharides, glycoproteins, glycolipids, colominic acid and synthetic substrates.. Inhibited by the neuraminidase inhibitors zanamivir (Relenza) and oseltamivir (Tamiflu). These drugs interfere with the release of progeny virus from infected cells and are effective against all influenza strains. Resistance to neuraminidase inhibitors is quite rare. Functionally, catalyzes the removal of terminal sialic acid residues from viral and cellular glycoconjugates. Cleaves off the terminal sialic acids on the glycosylated HA during virus budding to facilitate virus release. Additionally helps virus spread through the circulation by further removing sialic acids from the cell surface. These cleavages prevent self-aggregation and ensure the efficient spread of the progeny virus from cell to cell. Otherwise, infection would be limited to one round of replication. Described as a receptor-destroying enzyme because it cleaves a terminal sialic acid from the cellular receptors. May facilitate viral invasion of the upper airways by cleaving the sialic acid moieties on the mucin of the airway epithelial cells. Likely to plays a role in the budding process through its association with lipid rafts during intracellular transport. May additionally display a raft-association independent effect on budding. Plays a role in the determination of host range restriction on replication and virulence. Sialidase activity in late endosome/lysosome traffic seems to enhance virus replication. The polypeptide is Neuraminidase (Aves (whales)).